The sequence spans 183 residues: Archaemetzincin (183 aa).

Histidine 132 lines the Zn(2+) pocket. The active-site Proton acceptor is the glutamate 133. Zn(2+) contacts are provided by histidine 136, histidine 142, cysteine 143, cysteine 148, cysteine 167, and cysteine 170.

It belongs to the peptidase M54 family. As to quaternary structure, monomer. The cofactor is Zn(2+).

Probable zinc metalloprotease whose natural substrate is unknown. This Aeropyrum pernix (strain ATCC 700893 / DSM 11879 / JCM 9820 / NBRC 100138 / K1) protein is Archaemetzincin.